Reading from the N-terminus, the 231-residue chain is Ribose-5-phosphate isomerase A (231 aa).

Substrate-binding positions include 31–34 (SGST), 87–90 (DGAD), and 100–103 (KGGG). The active-site Proton acceptor is E109. K127 lines the substrate pocket.

The protein belongs to the ribose 5-phosphate isomerase family. As to quaternary structure, homodimer.

The catalysed reaction is aldehydo-D-ribose 5-phosphate = D-ribulose 5-phosphate. The protein operates within carbohydrate degradation; pentose phosphate pathway; D-ribose 5-phosphate from D-ribulose 5-phosphate (non-oxidative stage): step 1/1. Its function is as follows. Catalyzes the reversible conversion of ribose-5-phosphate to ribulose 5-phosphate. In Chlamydia pneumoniae (Chlamydophila pneumoniae), this protein is Ribose-5-phosphate isomerase A.